A 184-amino-acid chain; its full sequence is Large ribosomal subunit protein uL6 (184 aa).

This sequence belongs to the universal ribosomal protein uL6 family. As to quaternary structure, part of the 50S ribosomal subunit.

In terms of biological role, this protein binds to the 23S rRNA, and is important in its secondary structure. It is located near the subunit interface in the base of the L7/L12 stalk, and near the tRNA binding site of the peptidyltransferase center. This chain is Large ribosomal subunit protein uL6, found in Pyrococcus abyssi (strain GE5 / Orsay).